We begin with the raw amino-acid sequence, 1316 residues long: DNA-directed RNA polymerase subunit beta' (1316 aa).

The Zn(2+) site is built by Cys60, Cys62, Cys75, and Cys78. Mg(2+)-binding residues include Asp535, Asp537, and Asp539. Cys891, Cys968, Cys975, and Cys978 together coordinate Zn(2+).

This sequence belongs to the RNA polymerase beta' chain family. As to quaternary structure, the RNAP catalytic core consists of 2 alpha, 1 beta, 1 beta' and 1 omega subunit. When a sigma factor is associated with the core the holoenzyme is formed, which can initiate transcription. It depends on Mg(2+) as a cofactor. Zn(2+) serves as cofactor.

The catalysed reaction is RNA(n) + a ribonucleoside 5'-triphosphate = RNA(n+1) + diphosphate. In terms of biological role, DNA-dependent RNA polymerase catalyzes the transcription of DNA into RNA using the four ribonucleoside triphosphates as substrates. The polypeptide is DNA-directed RNA polymerase subunit beta' (Mycobacterium tuberculosis (strain CDC 1551 / Oshkosh)).